Consider the following 338-residue polypeptide: Holliday junction branch migration complex subunit RuvB (338 aa).

The interval 1–184 is large ATPase domain (RuvB-L); it reads MTEEERLLSA…FGIISHMEYY (184 aa). Residues leucine 23, arginine 24, glycine 65, lysine 68, threonine 69, threonine 70, 131–133, arginine 174, tyrosine 184, and arginine 221 each bind ATP; that span reads EDF. Threonine 69 serves as a coordination point for Mg(2+). Positions 185-255 are small ATPAse domain (RuvB-S); it reads QEQDLKEIVL…IADKALTLLQ (71 aa). The interval 258-338 is head domain (RuvB-H); the sequence is HQGLDYVDQK…GYDYLEGRKN (81 aa). The DNA site is built by arginine 313 and arginine 318.

Belongs to the RuvB family. In terms of assembly, homohexamer. Forms an RuvA(8)-RuvB(12)-Holliday junction (HJ) complex. HJ DNA is sandwiched between 2 RuvA tetramers; dsDNA enters through RuvA and exits via RuvB. An RuvB hexamer assembles on each DNA strand where it exits the tetramer. Each RuvB hexamer is contacted by two RuvA subunits (via domain III) on 2 adjacent RuvB subunits; this complex drives branch migration. In the full resolvosome a probable DNA-RuvA(4)-RuvB(12)-RuvC(2) complex forms which resolves the HJ.

It localises to the cytoplasm. The enzyme catalyses ATP + H2O = ADP + phosphate + H(+). In terms of biological role, the RuvA-RuvB-RuvC complex processes Holliday junction (HJ) DNA during genetic recombination and DNA repair, while the RuvA-RuvB complex plays an important role in the rescue of blocked DNA replication forks via replication fork reversal (RFR). RuvA specifically binds to HJ cruciform DNA, conferring on it an open structure. The RuvB hexamer acts as an ATP-dependent pump, pulling dsDNA into and through the RuvAB complex. RuvB forms 2 homohexamers on either side of HJ DNA bound by 1 or 2 RuvA tetramers; 4 subunits per hexamer contact DNA at a time. Coordinated motions by a converter formed by DNA-disengaged RuvB subunits stimulates ATP hydrolysis and nucleotide exchange. Immobilization of the converter enables RuvB to convert the ATP-contained energy into a lever motion, pulling 2 nucleotides of DNA out of the RuvA tetramer per ATP hydrolyzed, thus driving DNA branch migration. The RuvB motors rotate together with the DNA substrate, which together with the progressing nucleotide cycle form the mechanistic basis for DNA recombination by continuous HJ branch migration. Branch migration allows RuvC to scan DNA until it finds its consensus sequence, where it cleaves and resolves cruciform DNA. The sequence is that of Holliday junction branch migration complex subunit RuvB from Enterococcus faecalis (strain ATCC 700802 / V583).